The following is a 119-amino-acid chain: Large ribosomal subunit protein bL20 (119 aa).

Belongs to the bacterial ribosomal protein bL20 family.

In terms of biological role, binds directly to 23S ribosomal RNA and is necessary for the in vitro assembly process of the 50S ribosomal subunit. It is not involved in the protein synthesizing functions of that subunit. This Thermoanaerobacter sp. (strain X514) protein is Large ribosomal subunit protein bL20.